Here is a 288-residue protein sequence, read N- to C-terminus: Putative aryl-alcohol dehydrogenase AAD10 (288 aa).

It belongs to the aldo/keto reductase family. Aldo/keto reductase 2 subfamily.

The polypeptide is Putative aryl-alcohol dehydrogenase AAD10 (AAD10) (Saccharomyces cerevisiae (strain ATCC 204508 / S288c) (Baker's yeast)).